A 517-amino-acid polypeptide reads, in one-letter code: Synaptic vesicular amine transporter (517 aa).

The Cytoplasmic portion of the chain corresponds to 1-20 (MALSDLVLLRWLRDSRHSRK). Residues 21–41 (LILFIVFLALLLDNMLLTVVV) form a helical membrane-spanning segment. At 42–132 (PIIPSYLYSI…EDKDLLNENV (91 aa)) the chain is on the extracellular side. N-linked (GlcNAc...) asparagine glycans are attached at residues N56, N83, N84, N91, and N113. A disordered region spans residues 100–119 (ESPKATTTQHTVTNTTVPPD). Positions 105-115 (TTTQHTVTNTT) are enriched in low complexity. C120 and C327 are disulfide-bonded. Residues 133–153 (QVGLLFASKATVQLLTNPFIG) traverse the membrane as a helical segment. Residues 154–162 (LLTNRIGYP) lie on the Cytoplasmic side of the membrane. A helical transmembrane segment spans residues 163–183 (IPMFAGFCIMFISTVMFAFSS). Over 184 to 192 (SYAFLLIAR) the chain is Extracellular. A helical transmembrane segment spans residues 193–213 (SLQGIGSSCSSVAGMGMLASV). At 214–222 (YTDDEERGN) the chain is on the cytoplasmic side. Residues 223 to 245 (AMGIALGGLAMGVLVGPPFGSVL) traverse the membrane as a helical segment. Residues L231 and V235 each contribute to the serotonin site. Residues 246-251 (YEFVGK) are Extracellular-facing. Residues 252 to 274 (TAPFLVLAALVLLDGAIQLFVLQ) form a helical membrane-spanning segment. The Cytoplasmic segment spans residues 275–294 (PSRVQPESQKGTPLTTLLKD). A helical transmembrane segment spans residues 295–314 (PYILIAAGSICFANMGIAML). Serotonin is bound by residues N308, I311, E315, F337, and Y344. The Extracellular portion of the chain corresponds to 315–331 (EPALPIWMMETMCSRKW). Residues 332-355 (QLGVAFLPASISYLIGTNIFGILA) traverse the membrane as a helical segment. Residues 356–360 (HKMGR) lie on the Cytoplasmic side of the membrane. Residues 361–381 (WLCALLGMIVVGISILCIPFA) form a helical membrane-spanning segment. Topologically, residues 382–392 (KNIYGLIAPNF) are extracellular. The chain crosses the membrane as a helical span at residues 393–413 (GVGFAIGMVDSSMMPIMGYLV). D402 serves as a coordination point for serotonin. Residues 414–417 (DLRH) are Cytoplasmic-facing. Residues 418 to 438 (VSVYGSVYAIADVAFCMGYAI) form a helical membrane-spanning segment. Y436 provides a ligand contact to serotonin. Residues 439–443 (GPSAG) lie on the Extracellular side of the membrane. Residues 444-465 (GAIAKAIGFPWLMTIIGIIDIV) form a helical membrane-spanning segment. Topologically, residues 466–517 (FAPLCFFLRSPPAKEEKMAILMDHNCPIKTKMYTQNNVQPYPVGDDEESESD) are cytoplasmic. Phosphoserine; by CK2 occurs at positions 514 and 516.

This sequence belongs to the major facilitator superfamily. Vesicular transporter family. As to quaternary structure, interacts with SLC6A3. In terms of tissue distribution, expressed in striata and substantia nigra.

Its subcellular location is the cytoplasmic vesicle. It is found in the secretory vesicle. The protein resides in the synaptic vesicle membrane. The protein localises to the secretory vesicle membrane. It localises to the cell projection. Its subcellular location is the axon. It is found in the dendrite. It catalyses the reaction serotonin(in) + 2 H(+)(out) = serotonin(out) + 2 H(+)(in). It carries out the reaction dopamine(in) + 2 H(+)(out) = dopamine(out) + 2 H(+)(in). The enzyme catalyses histamine(in) + 2 H(+)(out) = histamine(out) + 2 H(+)(in). With respect to regulation, strongly inhibited by reserpine and tetrabenazine. Also inhibited to a lesser extent by ketanserin and fenfluramine. Reserpine and ketanserin inhibit by blocking the substrate-binding pocket. Tetrabenazine traps SLC18A2/VMAT2 in an occluded conformation and its inhibition is specific to SLC18A2/VMAT2 but not SLC18A1/VMAT1. In terms of biological role, electrogenic antiporter that exchanges one cationic monoamine with two intravesicular protons across the membrane of secretory and synaptic vesicles. Uses the electrochemical proton gradient established by the V-type proton-pump ATPase to accumulate high concentrations of monoamines inside the vesicles prior to their release via exocytosis. Transports a variety of catecholamines such as dopamine, adrenaline and noradrenaline, histamine, and indolamines such as serotonin. Regulates the transvesicular monoaminergic gradient that determines the quantal size. Mediates somatodendritic dopamine release in hippocampal neurons, likely as part of a regulated secretory pathway that integrates retrograde synaptic signals. Acts as a primary transporter for striatal dopamine loading ensuring impulse-dependent release of dopamine at the synaptic cleft. Responsible for histamine and serotonin storage and subsequent corelease from mast cell granules. The polypeptide is Synaptic vesicular amine transporter (Slc18a2) (Mus musculus (Mouse)).